A 263-amino-acid polypeptide reads, in one-letter code: 4-hydroxy-tetrahydrodipicolinate reductase (263 aa).

Residues 7–12 (GFKGRM), 96–98 (GTT), and 122–125 (APNF) contribute to the NAD(+) site. Residue H152 is the Proton donor/acceptor of the active site. H153 is a binding site for (S)-2,3,4,5-tetrahydrodipicolinate. K156 serves as the catalytic Proton donor. 162-163 (GT) is a (S)-2,3,4,5-tetrahydrodipicolinate binding site.

It belongs to the DapB family.

The protein localises to the cytoplasm. The catalysed reaction is (S)-2,3,4,5-tetrahydrodipicolinate + NAD(+) + H2O = (2S,4S)-4-hydroxy-2,3,4,5-tetrahydrodipicolinate + NADH + H(+). The enzyme catalyses (S)-2,3,4,5-tetrahydrodipicolinate + NADP(+) + H2O = (2S,4S)-4-hydroxy-2,3,4,5-tetrahydrodipicolinate + NADPH + H(+). It functions in the pathway amino-acid biosynthesis; L-lysine biosynthesis via DAP pathway; (S)-tetrahydrodipicolinate from L-aspartate: step 4/4. In terms of biological role, catalyzes the conversion of 4-hydroxy-tetrahydrodipicolinate (HTPA) to tetrahydrodipicolinate. The sequence is that of 4-hydroxy-tetrahydrodipicolinate reductase from Listeria monocytogenes serovar 1/2a (strain ATCC BAA-679 / EGD-e).